A 155-amino-acid chain; its full sequence is Aspartate carbamoyltransferase regulatory chain (155 aa).

Zn(2+)-binding residues include C113, C118, C141, and C144.

It belongs to the PyrI family. Contains catalytic and regulatory chains. Zn(2+) serves as cofactor.

Its function is as follows. Involved in allosteric regulation of aspartate carbamoyltransferase. The protein is Aspartate carbamoyltransferase regulatory chain of Methanococcus aeolicus (strain ATCC BAA-1280 / DSM 17508 / OCM 812 / Nankai-3).